Consider the following 397-residue polypeptide: Polygalacturonase (397 aa).

The N-terminal stretch at 1–22 is a signal peptide; it reads MGSYLGIYTILVLCLLGYSANA. PbH1 repeat units follow at residues 169-195, 196-217, 219-239, and 249-270; these read GKNM…HLGR, CEGV…SVGD, MKNL…SVGS, and VTDI…RIKT. N-linked (GlcNAc...) asparagine glycosylation is present at N171. D210 functions as the Proton donor in the catalytic mechanism. A disulfide bridge links C212 with C229. H233 is a catalytic residue. The N-linked (GlcNAc...) asparagine glycan is linked to N256. Intrachain disulfides connect C341–C347 and C370–C386.

This sequence belongs to the glycosyl hydrolase 28 family. Pollen.

It is found in the secreted. It localises to the cell wall. It catalyses the reaction (1,4-alpha-D-galacturonosyl)n+m + H2O = (1,4-alpha-D-galacturonosyl)n + (1,4-alpha-D-galacturonosyl)m.. Its function is as follows. May function in depolymerizing pectin during pollen development, germination, and tube growth. This chain is Polygalacturonase, found in Brassica napus (Rape).